The primary structure comprises 442 residues: Proline--tRNA ligase (442 aa).

It belongs to the class-II aminoacyl-tRNA synthetase family. ProS type 2 subfamily. As to quaternary structure, homodimer.

It is found in the cytoplasm. It carries out the reaction tRNA(Pro) + L-proline + ATP = L-prolyl-tRNA(Pro) + AMP + diphosphate. In terms of biological role, catalyzes the attachment of proline to tRNA(Pro) in a two-step reaction: proline is first activated by ATP to form Pro-AMP and then transferred to the acceptor end of tRNA(Pro). This Brucella suis (strain ATCC 23445 / NCTC 10510) protein is Proline--tRNA ligase.